The chain runs to 944 residues: Valine--tRNA ligase (944 aa).

Positions 43-53 (PNVTGTLHMGH) match the 'HIGH' region motif. The short motif at 550–554 (KMSKS) is the 'KMSKS' region element. Lysine 553 provides a ligand contact to ATP. The stretch at 878 to 942 (LVDMDAERTR…QLTGLREQRA (65 aa)) forms a coiled coil.

Belongs to the class-I aminoacyl-tRNA synthetase family. ValS type 1 subfamily. In terms of assembly, monomer.

The protein localises to the cytoplasm. It carries out the reaction tRNA(Val) + L-valine + ATP = L-valyl-tRNA(Val) + AMP + diphosphate. In terms of biological role, catalyzes the attachment of valine to tRNA(Val). As ValRS can inadvertently accommodate and process structurally similar amino acids such as threonine, to avoid such errors, it has a 'posttransfer' editing activity that hydrolyzes mischarged Thr-tRNA(Val) in a tRNA-dependent manner. The sequence is that of Valine--tRNA ligase from Xanthomonas axonopodis pv. citri (strain 306).